A 150-amino-acid chain; its full sequence is Transcription antitermination protein NusB (150 aa).

This sequence belongs to the NusB family.

Functionally, involved in transcription antitermination. Required for transcription of ribosomal RNA (rRNA) genes. Binds specifically to the boxA antiterminator sequence of the ribosomal RNA (rrn) operons. The chain is Transcription antitermination protein NusB from Streptococcus pyogenes serotype M2 (strain MGAS10270).